A 428-amino-acid polypeptide reads, in one-letter code: Adenylosuccinate synthetase (428 aa).

GTP contacts are provided by residues 12-18 (GDEGKGK) and 40-42 (GHT). Asp-13 (proton acceptor) is an active-site residue. Mg(2+) contacts are provided by Asp-13 and Gly-40. Residues 13 to 16 (DEGK), 38 to 41 (NAGH), Thr-130, Arg-144, Gln-224, Thr-239, and Arg-303 each bind IMP. His-41 functions as the Proton donor in the catalytic mechanism. Residue 299 to 305 (VTTGRSR) participates in substrate binding. GTP contacts are provided by residues Arg-305, 331–333 (KID), and 413–415 (GVG).

It belongs to the adenylosuccinate synthetase family. As to quaternary structure, homodimer. The cofactor is Mg(2+).

It localises to the cytoplasm. The enzyme catalyses IMP + L-aspartate + GTP = N(6)-(1,2-dicarboxyethyl)-AMP + GDP + phosphate + 2 H(+). It functions in the pathway purine metabolism; AMP biosynthesis via de novo pathway; AMP from IMP: step 1/2. In terms of biological role, plays an important role in the de novo pathway of purine nucleotide biosynthesis. Catalyzes the first committed step in the biosynthesis of AMP from IMP. This chain is Adenylosuccinate synthetase, found in Clostridium perfringens (strain 13 / Type A).